We begin with the raw amino-acid sequence, 345 residues long: Membrane progestin receptor gamma-A (345 aa).

The Cytoplasmic portion of the chain corresponds to 1-52; it reads MLNLIKLPQVFTINQVPKVFHEDGIISGYRHPCSSAKDCVLSLFQLTNETLN. Residues 53–73 traverse the membrane as a helical segment; the sequence is IWTHFLPTWFFLWKLLTVVLV. Over 74 to 80 the chain is Extracellular; the sequence is LEDWRDP. The chain crosses the membrane as a helical span at residues 81 to 101; the sequence is FIWPFLVFLLSCCVYPLASSC. The Cytoplasmic portion of the chain corresponds to 102–114; it reads AHTFSTMSERARH. Residues 115–135 form a helical membrane-spanning segment; the sequence is ICFFFDYGALSFYSLGSAIIY. The Extracellular segment spans residues 136-148; sequence SSYSFPDKWVNGT. The chain crosses the membrane as a helical span at residues 149 to 169; that stretch reads FHLNYVSIAVVNSIISTALAC. Residues 170–201 are Cytoplasmic-facing; sequence YSRLGLPFLEYNCHSIKRPSGKLDQKLCKCLR. The helical transmembrane segment at 202–222 threads the bilayer; sequence IIAFVYPYLFDNIPLFYRIFV. At 223 to 272 the chain is on the extracellular side; that stretch reads CAGEGCTVNEANTVHYQHTSLAFFTGFLFATHLPERLAPGSFDYIGHSHQ. A helical membrane pass occupies residues 273 to 293; that stretch reads LFHVFAIIGTYFQMTAIELDM. Over 294–314 the chain is Cytoplasmic; sequence AARKQWLHAHLPPVTFLNTVG. The chain crosses the membrane as a helical span at residues 315–335; that stretch reads AAFFSVVSGLCIVYVFSLSLF. Topologically, residues 336–345 are extracellular; that stretch reads STRGVKNKSF.

It belongs to the ADIPOR family.

Its subcellular location is the membrane. In terms of biological role, steroid membrane receptor. Binds progesterone. May be involved in oocyte maturation. This is Membrane progestin receptor gamma-A (paqr5a) from Danio rerio (Zebrafish).